Here is a 388-residue protein sequence, read N- to C-terminus: MRYLTAGESHGPSLTAIIEGIPAGLTLHPADIDHELQRRQGGYGRGARMSIETDRVQISSGVRHGKTTGAPITLTVINKDHQKWLDVMAVGDIEETLKLKRRVKHPRPGHADLVGGIKYHFNDLRDALERSSARETTMRVAVGAVAKRILAELGIDMLHHILIFGGITITILYKLSFRELQERALHSELSIVNPKQEEEIKTYIDKIKKEGDTIGGIIETIVQGVPAGLGSYVQWDKKLDAKLAQAVLSINAFKGVEFGVGFDMGFQKGSQVMDEITWTPTQGYGRQTNHLGGFEGGMTTGQPLVVKGVMKPIPTLYKPLMSVDIDSHEPYKATVERSDPTALPAAGVIMENVVATVLAKEILETFSSTTMSELQKAFSDYRAYVKQF.

NADP(+) is bound by residues Arg39 and Arg45. FMN-binding positions include 130-132 (RSS), 251-252 (NA), Gly296, 311-315 (KPIPT), and Arg337.

The protein belongs to the chorismate synthase family. As to quaternary structure, homotetramer. It depends on FMNH2 as a cofactor.

It carries out the reaction 5-O-(1-carboxyvinyl)-3-phosphoshikimate = chorismate + phosphate. Its pathway is metabolic intermediate biosynthesis; chorismate biosynthesis; chorismate from D-erythrose 4-phosphate and phosphoenolpyruvate: step 7/7. Catalyzes the anti-1,4-elimination of the C-3 phosphate and the C-6 proR hydrogen from 5-enolpyruvylshikimate-3-phosphate (EPSP) to yield chorismate, which is the branch point compound that serves as the starting substrate for the three terminal pathways of aromatic amino acid biosynthesis. This reaction introduces a second double bond into the aromatic ring system. The sequence is that of Chorismate synthase from Streptococcus pyogenes serotype M28 (strain MGAS6180).